Here is a 284-residue protein sequence, read N- to C-terminus: RNase adapter protein RapZ (284 aa).

8-15 contributes to the ATP binding site; sequence GRSGSGKS. Position 56-59 (56-59) interacts with GTP; that stretch reads DVRN. The RNA-binding stretch occupies residues 266–284; the sequence is RSRGKNVQLRHRTLEKRKE.

The protein belongs to the RapZ-like family. RapZ subfamily. Homotrimer.

Functionally, modulates the synthesis of GlmS, by affecting the processing and stability of the regulatory small RNA GlmZ. When glucosamine-6-phosphate (GlcN6P) concentrations are high in the cell, RapZ binds GlmZ and targets it to cleavage by RNase E. Consequently, GlmZ is inactivated and unable to activate GlmS synthesis. Under low GlcN6P concentrations, RapZ is sequestered and inactivated by an other regulatory small RNA, GlmY, preventing GlmZ degradation and leading to synthesis of GlmS. This chain is RNase adapter protein RapZ, found in Hamiltonella defensa subsp. Acyrthosiphon pisum (strain 5AT).